The primary structure comprises 298 residues: UDP-N-acetylenolpyruvoylglucosamine reductase (298 aa).

The FAD-binding PCMH-type domain occupies 26 to 191 (KTGGEAEYLA…LSATFSLTPG (166 aa)). Arginine 170 is an active-site residue. The active-site Proton donor is the serine 220. Glutamate 290 is a catalytic residue.

This sequence belongs to the MurB family. Requires FAD as cofactor.

It localises to the cytoplasm. It carries out the reaction UDP-N-acetyl-alpha-D-muramate + NADP(+) = UDP-N-acetyl-3-O-(1-carboxyvinyl)-alpha-D-glucosamine + NADPH + H(+). It functions in the pathway cell wall biogenesis; peptidoglycan biosynthesis. In terms of biological role, cell wall formation. This Lactobacillus helveticus (strain DPC 4571) protein is UDP-N-acetylenolpyruvoylglucosamine reductase.